Consider the following 195-residue polypeptide: Heterogeneous nuclear ribonucleoprotein A/B (195 aa).

The segment at 1-23 (EEVADGQAHGEXVYREEHHEGEK) is disordered. Basic and acidic residues predominate over residues 12 to 23 (XVYREEHHEGEK). The RRM domain occupies 32 to 48 (EETKLFVGALSWETTEK). Asymmetric dimethylarginine occurs at positions 119 and 122. Ser173 carries the post-translational modification Phosphoserine; by CK2.

Post-translationally, extensively phosphorylated on tyrosine residues.

Its subcellular location is the cytoplasm. It is found in the nucleus. Its function is as follows. May regulate mRNA translation and stability. It binds to poly(A) and poly(U) regions of RNA. This binding is inhibited when the protein is phosphorylated. The sequence is that of Heterogeneous nuclear ribonucleoprotein A/B from Artemia salina (Brine shrimp).